The following is a 256-amino-acid chain: Protein FixA (256 aa).

The protein belongs to the ETF beta-subunit/FixA family. As to quaternary structure, heterodimer of FixA and FixB.

It functions in the pathway amine and polyamine metabolism; carnitine metabolism. In terms of biological role, required for anaerobic carnitine reduction. May bring reductant to CaiA. This Salmonella agona (strain SL483) protein is Protein FixA.